Reading from the N-terminus, the 418-residue chain is Pestheic acid cluster transcriptional regulator 1 (418 aa).

The tract at residues 244–272 (GTAVTTTATTSSSFISKSSEEPSPKRIKP) is disordered. Residues 245 to 260 (TAVTTTATTSSSFISK) show a composition bias toward low complexity.

The protein localises to the nucleus. In terms of biological role, transcription factor that, with ptaR2 and ptaR3, coregulates the expression of the gene cluster that mediates the biosynthesis of pestheic acid, a diphenyl ether which is a biosynthetic precursor of the unique chloropupukeananes. The polypeptide is Pestheic acid cluster transcriptional regulator 1 (Pestalotiopsis fici (strain W106-1 / CGMCC3.15140)).